The primary structure comprises 473 residues: Adhesive plaque matrix protein 2 (473 aa).

The signal sequence occupies residues Met1–Gly17. 3',4'-dihydroxyphenylalanine is present on residues Tyr23, Tyr31, Tyr36, and Tyr43. EGF-like domains follow at residues Pro45–Asn81, Leu82–Cys117, Glu118–Cys154, Glu155–Cys191, Gln192–Cys228, Glu229–Cys265, Lys266–Cys301, Gly302–Glu340, Lys342–Thr378, Lys383–Thr420, and Lys425–Ser461. 33 cysteine pairs are disulfide-bonded: Cys49/Cys60, Cys54/Cys69, Cys71/Cys80, Cys86/Cys97, Cys91/Cys106, Cys108/Cys117, Cys122/Cys133, Cys127/Cys143, Cys145/Cys154, Cys159/Cys170, Cys164/Cys180, Cys182/Cys191, Cys196/Cys207, Cys201/Cys217, Cys219/Cys228, Cys233/Cys244, Cys238/Cys254, Cys256/Cys265, Cys270/Cys281, Cys275/Cys290, Cys292/Cys301, Cys306/Cys317, Cys311/Cys328, Cys330/Cys339, Cys346/Cys357, Cys351/Cys366, Cys368/Cys377, Cys387/Cys399, Cys393/Cys408, Cys410/Cys419, Cys429/Cys440, Cys434/Cys449, and Cys451/Cys460. Residue Asn93 is glycosylated (N-linked (GlcNAc...) asparagine).

Post-translationally, contains L-DOPA (3',4'-dihydroxyphenylalanine). In terms of tissue distribution, produced by the byssal gland.

The protein localises to the secreted. In terms of biological role, provides adhesiveness to the mussel's foot. Mussels produce one of the strongest water insoluble glues. The mussel's adhesive is a bundle of threads, called a byssus, formed by a fibrous collagenous core coated with adhesive proteins. The polypeptide is Adhesive plaque matrix protein 2 (FP2) (Mytilus galloprovincialis (Mediterranean mussel)).